The sequence spans 595 residues: Arginine--tRNA ligase (595 aa).

The short motif at 132–142 is the 'HIGH' region element; that stretch reads ANPTGPLHVGH.

The protein belongs to the class-I aminoacyl-tRNA synthetase family. Monomer.

It is found in the cytoplasm. The enzyme catalyses tRNA(Arg) + L-arginine + ATP = L-arginyl-tRNA(Arg) + AMP + diphosphate. This chain is Arginine--tRNA ligase, found in Cupriavidus taiwanensis (strain DSM 17343 / BCRC 17206 / CCUG 44338 / CIP 107171 / LMG 19424 / R1) (Ralstonia taiwanensis (strain LMG 19424)).